A 148-amino-acid chain; its full sequence is MAPKGEKKPAEKKPAEEKKSTVAEKAPAEKKPKAGKKLPKEGGSAAGEKKKKRSKKSVETYKIYIFKVLKQVHPDIGISSKAMGIMNSFINDIFEKLAQESSRLARYNKKPTITSREIQTAVRLVLPGELAKHAVSEGTKAVTKFTSS.

Basic and acidic residues predominate over residues 1–32 (MAPKGEKKPAEKKPAEEKKSTVAEKAPAEKKP). Residues 1–57 (MAPKGEKKPAEKKPAEEKKSTVAEKAPAEKKPKAGKKLPKEGGSAAGEKKKKRSKKS) are disordered. 3 positions are modified to N6-acetyllysine: lysine 7, lysine 36, and lysine 37. Lysine 144 is covalently cross-linked (Glycyl lysine isopeptide (Lys-Gly) (interchain with G-Cter in ubiquitin)).

It belongs to the histone H2B family. As to quaternary structure, the nucleosome is a histone octamer containing two molecules each of H2A, H2B, H3 and H4 assembled in one H3-H4 heterotetramer and two H2A-H2B heterodimers. The octamer wraps approximately 147 bp of DNA. In terms of processing, can be acetylated to form H2BK6ac, H2BK33ac and H2BK34ac. Post-translationally, monoubiquitinated to form H2BK143ub1; may give a specific tag for epigenetic transcriptional activation.

It localises to the nucleus. The protein resides in the chromosome. Core component of nucleosome. Nucleosomes wrap and compact DNA into chromatin, limiting DNA accessibility to the cellular machineries which require DNA as a template. Histones thereby play a central role in transcription regulation, DNA repair, DNA replication and chromosomal stability. DNA accessibility is regulated via a complex set of post-translational modifications of histones, also called histone code, and nucleosome remodeling. In Medicago truncatula (Barrel medic), this protein is Probable histone H2B.1.